A 391-amino-acid chain; its full sequence is 3-ketoacyl-CoA thiolase (391 aa).

The active-site Acyl-thioester intermediate is Cys95. Catalysis depends on proton acceptor residues His347 and Cys377.

Belongs to the thiolase-like superfamily. Thiolase family. Heterotetramer of two alpha chains (FadB) and two beta chains (FadA).

The protein resides in the cytoplasm. It catalyses the reaction an acyl-CoA + acetyl-CoA = a 3-oxoacyl-CoA + CoA. It participates in lipid metabolism; fatty acid beta-oxidation. In terms of biological role, catalyzes the final step of fatty acid oxidation in which acetyl-CoA is released and the CoA ester of a fatty acid two carbons shorter is formed. In Pseudomonas aeruginosa (strain ATCC 15692 / DSM 22644 / CIP 104116 / JCM 14847 / LMG 12228 / 1C / PRS 101 / PAO1), this protein is 3-ketoacyl-CoA thiolase.